The following is a 344-amino-acid chain: Holliday junction branch migration complex subunit RuvB (344 aa).

The interval 1 to 185 is large ATPase domain (RuvB-L); sequence MSTSRSDALK…FGIDFRYDYY (185 aa). Residues leucine 24, arginine 25, glycine 66, lysine 69, threonine 70, threonine 71, 132-134, arginine 175, tyrosine 185, and arginine 222 each bind ATP; that span reads EDY. Threonine 70 provides a ligand contact to Mg(2+). The segment at 186–256 is small ATPAse domain (RuvB-S); sequence TADLLQEITQ…IADRALNALD (71 aa). The interval 259–344 is head domain (RuvB-H); the sequence is EEGLDDMDAR…AADQDLFDQE (86 aa). 2 residues coordinate DNA: arginine 314 and arginine 319.

The protein belongs to the RuvB family. In terms of assembly, homohexamer. Forms an RuvA(8)-RuvB(12)-Holliday junction (HJ) complex. HJ DNA is sandwiched between 2 RuvA tetramers; dsDNA enters through RuvA and exits via RuvB. An RuvB hexamer assembles on each DNA strand where it exits the tetramer. Each RuvB hexamer is contacted by two RuvA subunits (via domain III) on 2 adjacent RuvB subunits; this complex drives branch migration. In the full resolvosome a probable DNA-RuvA(4)-RuvB(12)-RuvC(2) complex forms which resolves the HJ.

It localises to the cytoplasm. The catalysed reaction is ATP + H2O = ADP + phosphate + H(+). Functionally, the RuvA-RuvB-RuvC complex processes Holliday junction (HJ) DNA during genetic recombination and DNA repair, while the RuvA-RuvB complex plays an important role in the rescue of blocked DNA replication forks via replication fork reversal (RFR). RuvA specifically binds to HJ cruciform DNA, conferring on it an open structure. The RuvB hexamer acts as an ATP-dependent pump, pulling dsDNA into and through the RuvAB complex. RuvB forms 2 homohexamers on either side of HJ DNA bound by 1 or 2 RuvA tetramers; 4 subunits per hexamer contact DNA at a time. Coordinated motions by a converter formed by DNA-disengaged RuvB subunits stimulates ATP hydrolysis and nucleotide exchange. Immobilization of the converter enables RuvB to convert the ATP-contained energy into a lever motion, pulling 2 nucleotides of DNA out of the RuvA tetramer per ATP hydrolyzed, thus driving DNA branch migration. The RuvB motors rotate together with the DNA substrate, which together with the progressing nucleotide cycle form the mechanistic basis for DNA recombination by continuous HJ branch migration. Branch migration allows RuvC to scan DNA until it finds its consensus sequence, where it cleaves and resolves cruciform DNA. In Salinibacter ruber (strain DSM 13855 / M31), this protein is Holliday junction branch migration complex subunit RuvB.